The primary structure comprises 486 residues: Protein nucleotidyltransferase YdiU (486 aa).

ATP-binding residues include Gly-90, Gly-92, Arg-93, Lys-113, Asp-125, Gly-126, Arg-176, and Arg-183. Asp-252 serves as the catalytic Proton acceptor. Mg(2+) is bound by residues Asn-253 and Asp-262. Asp-262 contributes to the ATP binding site.

The protein belongs to the SELO family. Mg(2+) is required as a cofactor. Mn(2+) serves as cofactor.

The enzyme catalyses L-seryl-[protein] + ATP = 3-O-(5'-adenylyl)-L-seryl-[protein] + diphosphate. The catalysed reaction is L-threonyl-[protein] + ATP = 3-O-(5'-adenylyl)-L-threonyl-[protein] + diphosphate. It catalyses the reaction L-tyrosyl-[protein] + ATP = O-(5'-adenylyl)-L-tyrosyl-[protein] + diphosphate. It carries out the reaction L-histidyl-[protein] + UTP = N(tele)-(5'-uridylyl)-L-histidyl-[protein] + diphosphate. The enzyme catalyses L-seryl-[protein] + UTP = O-(5'-uridylyl)-L-seryl-[protein] + diphosphate. The catalysed reaction is L-tyrosyl-[protein] + UTP = O-(5'-uridylyl)-L-tyrosyl-[protein] + diphosphate. Functionally, nucleotidyltransferase involved in the post-translational modification of proteins. It can catalyze the addition of adenosine monophosphate (AMP) or uridine monophosphate (UMP) to a protein, resulting in modifications known as AMPylation and UMPylation. This is Protein nucleotidyltransferase YdiU from Pseudomonas aeruginosa (strain UCBPP-PA14).